The chain runs to 159 residues: SsrA-binding protein (159 aa).

Residues 137–159 (KRQTEKERDWEREKQRLFQRDQR) are disordered.

This sequence belongs to the SmpB family.

It is found in the cytoplasm. Functionally, required for rescue of stalled ribosomes mediated by trans-translation. Binds to transfer-messenger RNA (tmRNA), required for stable association of tmRNA with ribosomes. tmRNA and SmpB together mimic tRNA shape, replacing the anticodon stem-loop with SmpB. tmRNA is encoded by the ssrA gene; the 2 termini fold to resemble tRNA(Ala) and it encodes a 'tag peptide', a short internal open reading frame. During trans-translation Ala-aminoacylated tmRNA acts like a tRNA, entering the A-site of stalled ribosomes, displacing the stalled mRNA. The ribosome then switches to translate the ORF on the tmRNA; the nascent peptide is terminated with the 'tag peptide' encoded by the tmRNA and targeted for degradation. The ribosome is freed to recommence translation, which seems to be the essential function of trans-translation. This Cellvibrio japonicus (strain Ueda107) (Pseudomonas fluorescens subsp. cellulosa) protein is SsrA-binding protein.